Reading from the N-terminus, the 941-residue chain is MutS protein homolog 1 (941 aa).

747 to 754 (GPNMAGKS) contributes to the ATP binding site.

Belongs to the DNA mismatch repair MutS family.

It is found in the cytoplasm. The protein resides in the mitochondrion. Its function is as follows. Involved in mitochondrial DNA repair. The protein is MutS protein homolog 1 (msh1) of Schizosaccharomyces pombe (strain 972 / ATCC 24843) (Fission yeast).